The sequence spans 198 residues: Ribonuclease HII (198 aa).

The RNase H type-2 domain occupies 10-198; it reads QLVAGVDEVG…PVKRALGLAS (189 aa). Residues D16, E17, and D108 each contribute to the a divalent metal cation site.

This sequence belongs to the RNase HII family. Mn(2+) serves as cofactor. The cofactor is Mg(2+).

Its subcellular location is the cytoplasm. It catalyses the reaction Endonucleolytic cleavage to 5'-phosphomonoester.. In terms of biological role, endonuclease that specifically degrades the RNA of RNA-DNA hybrids. The polypeptide is Ribonuclease HII (Shigella sonnei (strain Ss046)).